The following is an 89-amino-acid chain: Large ribosomal subunit protein bL27 (89 aa).

Positions 1–22 are disordered; sequence MAHKKAGGSSRNGRDSESKRLG.

Belongs to the bacterial ribosomal protein bL27 family.

This Brucella abortus (strain S19) protein is Large ribosomal subunit protein bL27.